A 257-amino-acid polypeptide reads, in one-letter code: LexA repressor (257 aa).

Residues 64–84 constitute a DNA-binding region (H-T-H motif); that stretch reads FREIGEAAGLKSPSSVKHQLQ. Catalysis depends on for autocatalytic cleavage activity residues Ser-181 and Lys-218.

It belongs to the peptidase S24 family. In terms of assembly, homodimer.

It catalyses the reaction Hydrolysis of Ala-|-Gly bond in repressor LexA.. Represses a number of genes involved in the response to DNA damage (SOS response), including recA and lexA. In the presence of single-stranded DNA, RecA interacts with LexA causing an autocatalytic cleavage which disrupts the DNA-binding part of LexA, leading to derepression of the SOS regulon and eventually DNA repair. The chain is LexA repressor from Bifidobacterium adolescentis (strain ATCC 15703 / DSM 20083 / NCTC 11814 / E194a).